We begin with the raw amino-acid sequence, 176 residues long: Large ribosomal subunit protein uL10 (176 aa).

It belongs to the universal ribosomal protein uL10 family. In terms of assembly, part of the ribosomal stalk of the 50S ribosomal subunit. The N-terminus interacts with L11 and the large rRNA to form the base of the stalk. The C-terminus forms an elongated spine to which L12 dimers bind in a sequential fashion forming a multimeric L10(L12)X complex.

Functionally, forms part of the ribosomal stalk, playing a central role in the interaction of the ribosome with GTP-bound translation factors. The polypeptide is Large ribosomal subunit protein uL10 (rplJ) (Streptomyces antibioticus).